The primary structure comprises 1456 residues: Sterol 3-beta-glucosyltransferase (1456 aa).

Over residues 60 to 70 (ESDEEDGDEVE) the composition is skewed to acidic residues. Disordered stretches follow at residues 60-113 (ESDE…SISH) and 128-156 (LSPH…TQSE). Over residues 71–104 (TPSTTTTAVSPSATMSAPSPTATAPTPHSGTHTP) the composition is skewed to low complexity. Positions 137–146 (SSHEASRRGS) are enriched in basic and acidic residues. Residues 200-247 (QKLKGFAALDVDEQLIADYPVWLLKNVLIQGHLYITAKHMCFLSYLPR) form the GRAM 1 domain. A PH domain is found at 251–351 (ANIRSGTLVK…WVKALQKEIF (101 aa)). 2 disordered regions span residues 462 to 512 (HSAH…PRLP) and 524 to 776 (DKCD…QDTF). Over residues 496-508 (QPHERDEKRDSKL) the composition is skewed to basic and acidic residues. The span at 556 to 567 (LASQRTSSSTLF) shows a compositional bias: polar residues. 2 stretches are compositionally biased toward low complexity: residues 576-606 (SQPT…PASA) and 647-676 (GGAT…SSPG). Gly residues predominate over residues 677-696 (TPGGLGGPGAVGAGGPGVMG). Over residues 719-735 (APHDPAAAAAAADAAAP) the composition is skewed to low complexity. A GRAM 2 domain is found at 827–893 (ERFQKRFALG…KVVENATKDS (67 aa)). UDP-alpha-D-glucose-binding residues include Ser-1004, Arg-1005, Asp-1007, Asn-1279, Asn-1307, His-1310, His-1323, Ser-1326, Gly-1327, Thr-1328, Asp-1347, and Gln-1348.

The protein belongs to the glycosyltransferase 28 family.

Its subcellular location is the cytoplasm. It localises to the membrane. It catalyses the reaction a sterol + UDP-alpha-D-glucose = a sterol 3-beta-D-glucoside + UDP + H(+). The catalysed reaction is ergosterol + UDP-alpha-D-glucose = ergosteryl 3-beta-D-glucoside + UDP + H(+). Sterol glycosyltransferase responsible for the glycosylation of ergosterol to form ergosterol-glucoside. The sequence is that of Sterol 3-beta-glucosyltransferase from Yarrowia lipolytica (strain CLIB 122 / E 150) (Yeast).